Consider the following 857-residue polypeptide: DNA mismatch repair protein MutS (857 aa).

Residue 608-615 (GPNMSGKS) participates in ATP binding.

The protein belongs to the DNA mismatch repair MutS family.

Functionally, this protein is involved in the repair of mismatches in DNA. It is possible that it carries out the mismatch recognition step. This protein has a weak ATPase activity. The protein is DNA mismatch repair protein MutS of Lacticaseibacillus casei (strain BL23) (Lactobacillus casei).